Here is an 813-residue protein sequence, read N- to C-terminus: LPS-assembly protein LptD (813 aa).

Residues 1–22 (MRRALRLLPLPLSIAICLPAMA) form the signal peptide.

It belongs to the LptD family. In terms of assembly, component of the lipopolysaccharide transport and assembly complex. Interacts with LptE and LptA.

Its subcellular location is the cell outer membrane. In terms of biological role, together with LptE, is involved in the assembly of lipopolysaccharide (LPS) at the surface of the outer membrane. This is LPS-assembly protein LptD from Xanthomonas oryzae pv. oryzae (strain KACC10331 / KXO85).